We begin with the raw amino-acid sequence, 630 residues long: DELLA protein DWARF8 (630 aa).

The tract at residues 1–35 (MKREYQDAGGSGGDMGSSKDKMMAAAAGAGEQEEE) is disordered. The short motif at 38–42 (DELLA) is the DELLA motif element. Positions 161-222 (PIPSPVAAPS…AAPPATQASA (62 aa)) are disordered. Composition is skewed to low complexity over residues 165 to 176 (PVAAPSADPSTD) and 191 to 222 (TSSSSSSSSSMDGGRTRSSVVEAAPPATQASA). In terms of domain architecture, GRAS spans 234–623 (VDTQEAGIRL…RPLIATSAWR (390 aa)). Positions 241 to 297 (IRLVHALLACAEAVQQENFSAAEALVKQIPMLASSQGGAMRKVAAYFGEALARRVYR) are leucine repeat I (LRI). Positions 248–252 (LACAE) match the LxCxE motif motif. The segment at 316–381 (HAHFYESCPY…GGPPSFRLTG (66 aa)) is VHIID. The VHIID motif lies at 347 to 351 (VHVVD). Residues 395 to 427 (QVGWKLAQFAHTIRVDFQYRGLVAATLADLEPF) form a leucine repeat II (LRII) region. Residues 443–544 (IAVNSVFELH…EVYLGRQICN (102 aa)) are PFYRE. The LXXLL motif motif lies at 451–455 (LHRLL). Residues 547 to 623 (ACEGAERTER…RPLIATSAWR (77 aa)) form an SAW region.

Belongs to the GRAS family. DELLA subfamily. Post-translationally, phosphorylated. In terms of processing, ubiquitinated. Upon GA application it is ubiquitinated, leading to its subsequent degradation.

It localises to the nucleus. Functionally, probable transcriptional regulator that acts as a repressor of the gibberellin (GA) signaling pathway. Probably acts by participating in large multiprotein complexes that repress transcription of GA-inducible genes. Upon GA application, it is degraded by the proteasome, allowing the GA signaling pathway. This is DELLA protein DWARF8 (D8) from Zea mays (Maize).